A 220-amino-acid polypeptide reads, in one-letter code: Adenylate kinase (220 aa).

10-15 (GAGKGT) serves as a coordination point for ATP. Positions 30-59 (STGDMLRAAVKAGTPLGVEAKGYMDAGKLV) are NMP. Residues threonine 31, arginine 36, 57-59 (KLV), 85-88 (GFPR), and glutamine 92 contribute to the AMP site. The interval 122 to 159 (GRRTHPASGRTYHVKFNPPKVEGKDDVTGEPLIQRDDD) is LID. Residues arginine 123 and 132–133 (TY) contribute to the ATP site. AMP-binding residues include arginine 156 and arginine 167. Glycine 206 provides a ligand contact to ATP.

The protein belongs to the adenylate kinase family. As to quaternary structure, monomer.

The protein resides in the cytoplasm. The catalysed reaction is AMP + ATP = 2 ADP. It functions in the pathway purine metabolism; AMP biosynthesis via salvage pathway; AMP from ADP: step 1/1. Its function is as follows. Catalyzes the reversible transfer of the terminal phosphate group between ATP and AMP. Plays an important role in cellular energy homeostasis and in adenine nucleotide metabolism. This Burkholderia multivorans (strain ATCC 17616 / 249) protein is Adenylate kinase.